The primary structure comprises 109 residues: Ribulose bisphosphate carboxylase small subunit (109 aa).

This sequence belongs to the RuBisCO small chain family. Heterohexadecamer of 8 large and 8 small subunits. Forms complexes of many stoichiometries with Raf1 and RbcL.

The protein localises to the carboxysome. Functionally, ruBisCO catalyzes two reactions: the carboxylation of D-ribulose 1,5-bisphosphate, the primary event in carbon dioxide fixation, as well as the oxidative fragmentation of the pentose substrate in the photorespiration process. Both reactions occur simultaneously and in competition at the same active site. Although the small subunit is not catalytic it is essential for maximal activity. This Nostoc sp. (strain PCC 7120 / SAG 25.82 / UTEX 2576) protein is Ribulose bisphosphate carboxylase small subunit.